Reading from the N-terminus, the 380-residue chain is Tetraacyldisaccharide 4'-kinase (380 aa).

Position 51 to 58 (serine 51 to threonine 58) interacts with ATP.

It belongs to the LpxK family.

It carries out the reaction a lipid A disaccharide + ATP = a lipid IVA + ADP + H(+). Its pathway is glycolipid biosynthesis; lipid IV(A) biosynthesis; lipid IV(A) from (3R)-3-hydroxytetradecanoyl-[acyl-carrier-protein] and UDP-N-acetyl-alpha-D-glucosamine: step 6/6. In terms of biological role, transfers the gamma-phosphate of ATP to the 4'-position of a tetraacyldisaccharide 1-phosphate intermediate (termed DS-1-P) to form tetraacyldisaccharide 1,4'-bis-phosphate (lipid IVA). The chain is Tetraacyldisaccharide 4'-kinase from Bacteroides thetaiotaomicron (strain ATCC 29148 / DSM 2079 / JCM 5827 / CCUG 10774 / NCTC 10582 / VPI-5482 / E50).